We begin with the raw amino-acid sequence, 551 residues long: E3 ubiquitin-protein ligase HEL1 (551 aa).

The TRIAD supradomain stretch occupies residues 175-388; sequence NDFTCIICCD…KNFFQCTMYK (214 aa). Zn(2+)-binding residues include C179, C182, C200, C203, C301, C304, H309, C314, C341, and C344. The RING-type 1 zinc finger occupies 179–225; it reads CIICCDKKDTETFALECGHEYCINCYRHYIKDKLHEGNIITCMDCSL. An IBR-type zinc finger spans residues 242–314; that stretch reads SKLMDSSIKS…GFEVHSPADC (73 aa). An RING-type 2; atypical zinc finger spans residues 341–370; the sequence is CPKCSVNIEKNGGCNHMVCSSCKYEFCWIC. Residue C354 is part of the active site. 6 residues coordinate Zn(2+): C359, C362, C367, C370, H377, and C384.

Belongs to the RBR family. In terms of assembly, interacts with the E2 ubiquitin-conjugating enzyme UBC4 and histones H3 and H4.

The enzyme catalyses [E2 ubiquitin-conjugating enzyme]-S-ubiquitinyl-L-cysteine + [acceptor protein]-L-lysine = [E2 ubiquitin-conjugating enzyme]-L-cysteine + [acceptor protein]-N(6)-ubiquitinyl-L-lysine.. It functions in the pathway protein modification; protein ubiquitination. Probable ubiquitin-protein ligase involved in the degradation-related ubiquitination of histones. Contributes to the post-translational regulation of histone protein levels by polyubiquitination of excess histones for subsequent degradation. This is E3 ubiquitin-protein ligase HEL1 from Saccharomyces cerevisiae (strain ATCC 204508 / S288c) (Baker's yeast).